The chain runs to 193 residues: Protein CURVATURE THYLAKOID 1D, chloroplastic (193 aa).

A chloroplast-targeting transit peptide spans 1 to 51; it reads MELCTRSTTIITHLPASFNGHGYLAGKSVDRISLPLQRNVASLVLQSRTLR. Over 52–117 the chain is Stromal; sequence CSRKFPGETV…NDIKLDSDKT (66 aa). The helical transmembrane segment at 118 to 138 threads the bilayer; that stretch reads YSILLYGSGAIVALYLTSAIV. Topologically, residues 139 to 142 are lumenal; it reads SSLE. A helical transmembrane segment spans residues 143–163; it reads AIPLFPKLMEVVGLGYTLWFT. Topologically, residues 164–193 are stromal; that stretch reads TRYLLFKRNREELKTKVSEIKKQVLGSDSE.

This sequence belongs to the CURT family. In terms of assembly, homo- and heterodimers and trimers.

Its subcellular location is the plastid. The protein localises to the chloroplast thylakoid membrane. Functionally, determines thylakoid architecture by inducing membrane curvature. The protein is Protein CURVATURE THYLAKOID 1D, chloroplastic (CURT1D) of Arabidopsis thaliana (Mouse-ear cress).